We begin with the raw amino-acid sequence, 428 residues long: Histidinol dehydrogenase (428 aa).

Residues Tyr-125, Gln-187, and Asn-210 each contribute to the NAD(+) site. The substrate site is built by Ser-234, Gln-256, and His-259. Residues Gln-256 and His-259 each coordinate Zn(2+). Catalysis depends on proton acceptor residues Glu-323 and His-324. Substrate-binding residues include His-324, Asp-357, Glu-411, and His-416. Zn(2+) is bound at residue Asp-357. His-416 is a Zn(2+) binding site.

The protein belongs to the histidinol dehydrogenase family. Zn(2+) is required as a cofactor.

It catalyses the reaction L-histidinol + 2 NAD(+) + H2O = L-histidine + 2 NADH + 3 H(+). It participates in amino-acid biosynthesis; L-histidine biosynthesis; L-histidine from 5-phospho-alpha-D-ribose 1-diphosphate: step 9/9. Its function is as follows. Catalyzes the sequential NAD-dependent oxidations of L-histidinol to L-histidinaldehyde and then to L-histidine. The polypeptide is Histidinol dehydrogenase (Bacteroides thetaiotaomicron (strain ATCC 29148 / DSM 2079 / JCM 5827 / CCUG 10774 / NCTC 10582 / VPI-5482 / E50)).